Reading from the N-terminus, the 80-residue chain is UPF0248 protein YG5714_2801 (80 aa).

It belongs to the UPF0248 family.

The chain is UPF0248 protein YG5714_2801 from Saccharolobus islandicus (strain Y.G.57.14 / Yellowstone #1) (Sulfolobus islandicus).